We begin with the raw amino-acid sequence, 130 residues long: Small ribosomal subunit protein uS8 (130 aa).

It belongs to the universal ribosomal protein uS8 family. As to quaternary structure, part of the 30S ribosomal subunit.

One of the primary rRNA binding proteins, it binds directly to 16S rRNA central domain where it helps coordinate assembly of the platform of the 30S subunit. The protein is Small ribosomal subunit protein uS8 of Methanococcus voltae.